The primary structure comprises 270 residues: Insulin-like growth factor-binding protein-like 1 (270 aa).

The signal sequence occupies residues 1–17 (MPRLPLLLLLLPSLARG). An IGFBP N-terminal domain is found at 26–101 (RHPECSPCQQ…PEGTGLCVCA (76 aa)). 7 cysteine pairs are disulfide-bonded: cysteine 30-cysteine 55, cysteine 33-cysteine 57, cysteine 38-cysteine 58, cysteine 44-cysteine 61, cysteine 69-cysteine 83, cysteine 77-cysteine 98, and cysteine 107-cysteine 143. The region spanning 87–145 (ASGTAPEGTGLCVCAQRGAVCGSDGRSYSSICALRLRARHAPRAHHGHLHKARDGPCEF) is the Kazal-like domain. The 105-residue stretch at 147 to 251 (PVVLMPPRDI…GEAQSHGTVT (105 aa)) folds into the Ig-like C2-type domain. N-linked (GlcNAc...) asparagine glycosylation is present at asparagine 158. A disulfide bridge connects residues cysteine 168 and cysteine 235.

It localises to the secreted. Functionally, IGF-binding proteins prolong the half-life of IGFs and have been shown to either inhibit or stimulate the growth promoting effects of the IGFs in cell culture. They alter the interaction of IGFs with their cell surface receptors. The polypeptide is Insulin-like growth factor-binding protein-like 1 (Igfbpl1) (Mus musculus (Mouse)).